The primary structure comprises 511 residues: V-type proton ATPase subunit B, brain isoform (511 aa).

Arginine 400 contributes to the ATP binding site.

The protein belongs to the ATPase alpha/beta chains family. In terms of assembly, V-ATPase is a heteromultimeric enzyme made up of two complexes: the ATP-hydrolytic V1 complex and the proton translocation V0 complex. The V1 complex consists of three catalytic AB heterodimers that form a heterohexamer, three peripheral stalks each consisting of EG heterodimers, one central rotor including subunits D and F, and the regulatory subunits C and H. The proton translocation complex V0 consists of the proton transport subunit a, a ring of proteolipid subunits c9c'', rotary subunit d, subunits e and f, and the accessory subunits ATP6AP1/Ac45 and ATP6AP2/PRR.

Its subcellular location is the apical cell membrane. The protein localises to the melanosome. It is found in the cytoplasm. It localises to the cytoplasmic vesicle. The protein resides in the secretory vesicle. Its subcellular location is the synaptic vesicle membrane. The protein localises to the clathrin-coated vesicle membrane. Functionally, non-catalytic subunit of the V1 complex of vacuolar(H+)-ATPase (V-ATPase), a multisubunit enzyme composed of a peripheral complex (V1) that hydrolyzes ATP and a membrane integral complex (V0) that translocates protons. V-ATPase is responsible for acidifying and maintaining the pH of intracellular compartments and in some cell types, is targeted to the plasma membrane, where it is responsible for acidifying the extracellular environment. In renal intercalated cells, can partially compensate the lack of ATP6V1B1 and mediate secretion of protons (H+) into the urine under base-line conditions but not in conditions of acid load. This Pongo abelii (Sumatran orangutan) protein is V-type proton ATPase subunit B, brain isoform (ATP6V1B2).